The following is a 431-amino-acid chain: Adenylosuccinate synthetase (431 aa).

GTP contacts are provided by residues 12–18 (GDEGKGK) and 40–42 (GHT). Aspartate 13 acts as the Proton acceptor in catalysis. Mg(2+) is bound by residues aspartate 13 and glycine 40. IMP contacts are provided by residues 13 to 16 (DEGK), 38 to 41 (NAGH), threonine 131, arginine 145, glutamine 225, threonine 240, and arginine 304. Histidine 41 (proton donor) is an active-site residue. Residue 300–306 (VNTGRPR) participates in substrate binding. GTP is bound by residues arginine 306, 332–334 (KLD), and 414–416 (STS).

It belongs to the adenylosuccinate synthetase family. As to quaternary structure, homodimer. It depends on Mg(2+) as a cofactor.

It localises to the cytoplasm. The catalysed reaction is IMP + L-aspartate + GTP = N(6)-(1,2-dicarboxyethyl)-AMP + GDP + phosphate + 2 H(+). Its pathway is purine metabolism; AMP biosynthesis via de novo pathway; AMP from IMP: step 1/2. Functionally, plays an important role in the de novo pathway of purine nucleotide biosynthesis. Catalyzes the first committed step in the biosynthesis of AMP from IMP. This is Adenylosuccinate synthetase from Rhizobium rhizogenes (strain K84 / ATCC BAA-868) (Agrobacterium radiobacter).